The primary structure comprises 129 residues: Small ribosomal subunit protein uS11 (129 aa).

It belongs to the universal ribosomal protein uS11 family. Part of the 30S ribosomal subunit. Interacts with proteins S7 and S18. Binds to IF-3.

Functionally, located on the platform of the 30S subunit, it bridges several disparate RNA helices of the 16S rRNA. Forms part of the Shine-Dalgarno cleft in the 70S ribosome. The polypeptide is Small ribosomal subunit protein uS11 (Hydrogenovibrio crunogenus (strain DSM 25203 / XCL-2) (Thiomicrospira crunogena)).